The primary structure comprises 160 residues: uncharacterized protein (160 aa).

A helical transmembrane segment spans residues 8-28 (LLFILVFISGFILFTVYSYTA).

The protein resides in the membrane. This is an uncharacterized protein from Escherichia coli (strain K12).